A 235-amino-acid polypeptide reads, in one-letter code: Calcium-activated potassium channel subunit beta-2 (235 aa).

Residues 1–45 (MFIWTSGRTSSSYRHDEKRNIYQKIRDHDLLDKRKTVTALKAGED) are ball and chain. Residues 1–46 (MFIWTSGRTSSSYRHDEKRNIYQKIRDHDLLDKRKTVTALKAGEDR) are Cytoplasmic-facing. Residues 47-67 (AILLGLAMMVCSIMMYFLLGI) traverse the membrane as a helical segment. Topologically, residues 68–194 (TLLRSYMQSV…VILTKLYSSN (127 aa)) are extracellular. 3 N-linked (GlcNAc...) asparagine glycosylation sites follow: Asn88, Asn96, and Asn119. The chain crosses the membrane as a helical span at residues 195–215 (VLFHSLFWPTCMMAGGVAIVA). Residues 216 to 235 (MVKLTQYLSLLCERIQRINR) are Cytoplasmic-facing.

The protein belongs to the KCNMB (TC 8.A.14.1) family. KCNMB2 subfamily. In terms of assembly, interacts with KCNMA1 tetramer. There are probably 4 molecules of KCMNB2 per KCNMA1 tetramer. Post-translationally, N-glycosylated. Highly expressed in brain and heart. Also expressed in lung.

The protein resides in the membrane. Functionally, regulatory subunit of the calcium activated potassium KCNMA1 (maxiK) channel. Modulates the calcium sensitivity and gating kinetics of KCNMA1, thereby contributing to KCNMA1 channel diversity. Acts as a negative regulator that confers rapid and complete inactivation of KCNMA1 channel complex. This is Calcium-activated potassium channel subunit beta-2 (Kcnmb2) from Rattus norvegicus (Rat).